Reading from the N-terminus, the 221-residue chain is Alpha-ketoglutarate-dependent dioxygenase alkB homolog 7, mitochondrial (221 aa).

The N-terminal 23 residues, 1–23 (MAGSRRLAMRLLSGCAWVRGSDS), are a transit peptide targeting the mitochondrion. Fe cation contacts are provided by His-121 and Asp-123. Tyr-165 provides a ligand contact to 2-oxoglutarate. His-177 is a binding site for Fe cation. 2-oxoglutarate is bound by residues 197–199 (RIS) and Arg-203.

It belongs to the alkB family. Fe(2+) serves as cofactor. Widely expressed.

The protein resides in the mitochondrion matrix. May function as protein hydroxylase; can catalyze auto-hydroxylation at Leu-110 (in vitro), but this activity may be due to the absence of the true substrate. Required to induce programmed necrosis in response to DNA damage caused by cytotoxic alkylating agents. Acts by triggering the collapse of mitochondrial membrane potential and loss of mitochondrial function that leads to energy depletion and cell death. ALKBH7-mediated necrosis is probably required to prevent the accumulation of cells with DNA damage. Does not display DNA demethylase activity. Involved in fatty acid metabolism. The protein is Alpha-ketoglutarate-dependent dioxygenase alkB homolog 7, mitochondrial (Alkbh7) of Mus musculus (Mouse).